Consider the following 745-residue polypeptide: Junction plakoglobin (745 aa).

The residue at position 1 (Met1) is an N-acetylmethionine. The O-linked (GlcNAc) threonine glycan is linked to Thr14. 2 positions are modified to phosphoserine: Ser99 and Ser125. ARM repeat units lie at residues 132–171 (NYQDDAELATRALPELTKLLNDEDPVVVTKAAMIVNQLSK), 172–215 (KEAS…LSHH), 216–255 (REGLLAIFKSGGIPALVRMLSSPVESVLFYAITTLHNLLL), 258–297 (EGAKMAVRLADGLQKMVPLLNKNNPKFLAITTDCLQLLAY), 298–341 (GNQE…LSVC), 342–381 (PSNKPAIVEAGGMQALGKHLTSNSPRLVQNCLWTLRNLSD), 383–420 (ATKQEGLESVLKILVNQLSVDDVNVLTCATGTLSNLTC), 423–464 (SKNK…HLTS), 470–510 (EMAQ…NLAL), 512–551 (PANHAPLQEAAVIPRLVQLLVKAHQDAQRHVAAGTQQPYT), 574–613 (PMNRMEIFRLNTIPLFVQLLYSSVENIQRVAAGVLCELAQ), and 615–661 (KEAA…PDYR). Residues 132 to 297 (NYQDDAELAT…TTDCLQLLAY (166 aa)) are interaction with DSC1 and DSG1. A Phosphoserine modification is found at Ser182. Residues 574 to 661 (PMNRMEIFRL…ISEDKNPDYR (88 aa)) form an interaction with DSC1 region. 2 positions are modified to phosphoserine: Ser665 and Ser730.

Belongs to the beta-catenin family. Homodimer. Component of an E-cadherin/catenin adhesion complex composed of at least E-cadherin/CDH1 and gamma-catenin/JUP, and possibly alpha-catenin/CTNNA1; the complex is located to adherens junctions. The stable association of CTNNA1 is controversial as CTNNA1 was shown not to bind to F-actin when assembled in the complex. Interacts with MUC1. Interacts with CAV1. Interacts with PTPRJ. Interacts with DSG1. Interacts with DSC1 and DSC2. Interacts with PKP2. Interacts with PKP3 (via N-terminus); the interaction is required for PKP3 localization to desmosome cell-cell junctions. Interacts with DSG4. Post-translationally, may be phosphorylated by FER. As to expression, expressed in the heart (at protein level).

The protein resides in the cell junction. The protein localises to the adherens junction. It is found in the desmosome. It localises to the cytoplasm. Its subcellular location is the cytoskeleton. The protein resides in the cell membrane. The protein localises to the nucleus. Common junctional plaque protein. The membrane-associated plaques are architectural elements in an important strategic position to influence the arrangement and function of both the cytoskeleton and the cells within the tissue. The presence of plakoglobin in both the desmosomes and in the intermediate junctions suggests that it plays a central role in the structure and function of submembranous plaques. Acts as a substrate for VE-PTP and is required by it to stimulate VE-cadherin function in endothelial cells. Can replace beta-catenin in E-cadherin/catenin adhesion complexes which are proposed to couple cadherins to the actin cytoskeleton. In Homo sapiens (Human), this protein is Junction plakoglobin.